Reading from the N-terminus, the 1529-residue chain is ABC multidrug transporter AFR2 (1529 aa).

The segment covering 1–10 has biased composition (gly residues); it reads MAFAGVGQGL. Residues 1 to 21 are disordered; the sequence is MAFAGVGQGLGTYDRTEQTSG. Residues 144–394 enclose the ABC transporter 1 domain; that stretch reads GALRDLISNR…FVDMGFHCPS (251 aa). Asn235 and Asn318 each carry an N-linked (GlcNAc...) asparagine glycan. The next 5 membrane-spanning stretches (helical) occupy residues 505–525, 539–559, 589–609, 614–634, and 648–668; these read LTLT…SVFY, ALLF…ILIL, IPYK…MTNL, GPYF…SMLF, and LAPA…AVNV. An N-linked (GlcNAc...) asparagine glycan is attached at Asn742. A helical membrane pass occupies residues 757-777; that stretch reads GILIGFFLFFTAIYMTATEFI. The ABC transporter 2 domain occupies 845–1087; sequence FSWKDVVYDI…ILIDYFEKNG (243 aa). 881-888 is a binding site for ATP; it reads GVSGAGKT. A run of 5 helical transmembrane segments spans residues 1193 to 1213, 1227 to 1247, 1268 to 1288, 1314 to 1334, and 1353 to 1373; these read YIWS…FSFF, FSVF…MPNF, IFIL…GAVI, LMFL…IMIV, and MCLI…FWMF. Asn1434 carries N-linked (GlcNAc...) asparagine glycosylation. The chain crosses the membrane as a helical span at residues 1465 to 1485; sequence FGLLWAYVVFNIIAAVGIYWL. A disordered region spans residues 1493-1529; sequence GKEQASEPEGVQEKLVPAQSSEKKRESVSRGSESTAA.

It belongs to the ABC transporter superfamily. ABCG family. PDR (TC 3.A.1.205) subfamily.

It is found in the cell membrane. The enzyme catalyses itraconazole(in) + ATP + H2O = itraconazole(out) + ADP + phosphate + H(+). The catalysed reaction is voriconazole(in) + ATP + H2O = voriconazole(out) + ADP + phosphate + H(+). It carries out the reaction fluconazole(in) + ATP + H2O = fluconazole(out) + ADP + phosphate + H(+). In terms of biological role, pleiotropic ABC efflux transporter that confers resistance to structurally and functionally unrelated compounds including azoles such as fluconazole (FLC), itraconazole (ITC), posaconazole (POS), and voriconazole (VRC). The protein is ABC multidrug transporter AFR2 of Cryptococcus neoformans var. grubii serotype A (strain H99 / ATCC 208821 / CBS 10515 / FGSC 9487) (Filobasidiella neoformans var. grubii).